The primary structure comprises 181 residues: Large ribosomal subunit protein uL5 (181 aa).

It belongs to the universal ribosomal protein uL5 family. In terms of assembly, part of the 50S ribosomal subunit; part of the 5S rRNA/L5/L18/L25 subcomplex. Contacts the 5S rRNA and the P site tRNA. Forms a bridge to the 30S subunit in the 70S ribosome.

Functionally, this is one of the proteins that bind and probably mediate the attachment of the 5S RNA into the large ribosomal subunit, where it forms part of the central protuberance. In the 70S ribosome it contacts protein S13 of the 30S subunit (bridge B1b), connecting the 2 subunits; this bridge is implicated in subunit movement. Contacts the P site tRNA; the 5S rRNA and some of its associated proteins might help stabilize positioning of ribosome-bound tRNAs. This is Large ribosomal subunit protein uL5 from Clostridium kluyveri (strain NBRC 12016).